Here is a 178-residue protein sequence, read N- to C-terminus: Large ribosomal subunit protein uL6 (178 aa).

This sequence belongs to the universal ribosomal protein uL6 family. As to quaternary structure, part of the 50S ribosomal subunit.

Its function is as follows. This protein binds to the 23S rRNA, and is important in its secondary structure. It is located near the subunit interface in the base of the L7/L12 stalk, and near the tRNA binding site of the peptidyltransferase center. In Gluconobacter oxydans (strain 621H) (Gluconobacter suboxydans), this protein is Large ribosomal subunit protein uL6.